A 248-amino-acid chain; its full sequence is 3-deoxy-manno-octulosonate cytidylyltransferase (248 aa).

Belongs to the KdsB family.

The protein resides in the cytoplasm. The catalysed reaction is 3-deoxy-alpha-D-manno-oct-2-ulosonate + CTP = CMP-3-deoxy-beta-D-manno-octulosonate + diphosphate. Its pathway is nucleotide-sugar biosynthesis; CMP-3-deoxy-D-manno-octulosonate biosynthesis; CMP-3-deoxy-D-manno-octulosonate from 3-deoxy-D-manno-octulosonate and CTP: step 1/1. It participates in bacterial outer membrane biogenesis; lipopolysaccharide biosynthesis. Its function is as follows. Activates KDO (a required 8-carbon sugar) for incorporation into bacterial lipopolysaccharide in Gram-negative bacteria. This Klebsiella pneumoniae (strain 342) protein is 3-deoxy-manno-octulosonate cytidylyltransferase.